The following is a 462-amino-acid chain: Integrator complex subunit 12 (462 aa).

Positions 39-132 are disordered; the sequence is LARGIDSSYR…PETRSSPITV (94 aa). Over residues 59-86 the composition is skewed to polar residues; that stretch reads ISSTKTVSVKQEPKTSSSLPSGNNNGKV. Lys68 participates in a covalent cross-link: Glycyl lysine isopeptide (Lys-Gly) (interchain with G-Cter in SUMO2). Basic and acidic residues predominate over residues 88–125; it reads TTEKVKKEGEKRPADKMKSDITEGADVPKKPRLEKPET. Position 128 is a phosphoserine (Ser128). Residues 159–215 form a PHD-type zinc finger; the sequence is GLACVVCRQMTVASGNQLVECQECHNLYHQDCHKPQVTDKEVTDPRLVWYCARCTRQ. Residue Lys254 forms a Glycyl lysine isopeptide (Lys-Gly) (interchain with G-Cter in SUMO2) linkage. Residues 305–328 show a composition bias toward polar residues; it reads PSTAKLSSAAQNNSGKPATSSANQ. Residues 305-462 form a disordered region; that stretch reads PSTAKLSSAA…KKAAQKKLKK (158 aa). 2 stretches are compositionally biased toward low complexity: residues 347–358 and 382–431; these read KIGSSNSTSPTV and VSKV…PSAS. The span at 434-443 shows a compositional bias: polar residues; that stretch reads GPTSQESQLN. Residues 449-462 show a composition bias toward basic residues; sequence QMVKKKAAQKKLKK.

Belongs to the Integrator subunit 12 family. In terms of assembly, component of the Integrator complex, composed of core subunits INTS1, INTS2, INTS3, INTS4, INTS5, INTS6, INTS7, INTS8, INTS9/RC74, INTS10, INTS11/CPSF3L, INTS12, INTS13, INTS14 and INTS15. The core complex associates with protein phosphatase 2A subunits PPP2CA and PPP2R1A, to form the Integrator-PP2A (INTAC) complex. Dephosphorylated at Ser-128 by the PNUTS-PP1 complex, promoting RNA polymerase II transcription pause-release.

Its subcellular location is the nucleus. Component of the integrator complex, a multiprotein complex that terminates RNA polymerase II (Pol II) transcription in the promoter-proximal region of genes. The integrator complex provides a quality checkpoint during transcription elongation by driving premature transcription termination of transcripts that are unfavorably configured for transcriptional elongation: the complex terminates transcription by (1) catalyzing dephosphorylation of the C-terminal domain (CTD) of Pol II subunit POLR2A/RPB1 and SUPT5H/SPT5, (2) degrading the exiting nascent RNA transcript via endonuclease activity and (3) promoting the release of Pol II from bound DNA. The integrator complex is also involved in terminating the synthesis of non-coding Pol II transcripts, such as enhancer RNAs (eRNAs), small nuclear RNAs (snRNAs), telomerase RNAs and long non-coding RNAs (lncRNAs). Mediates recruitment of cytoplasmic dynein to the nuclear envelope, probably as component of the integrator complex. The polypeptide is Integrator complex subunit 12 (INTS12) (Bos taurus (Bovine)).